The following is a 55-amino-acid chain: Large ribosomal subunit protein bL33 (55 aa).

The protein belongs to the bacterial ribosomal protein bL33 family.

This is Large ribosomal subunit protein bL33 from Bradyrhizobium diazoefficiens (strain JCM 10833 / BCRC 13528 / IAM 13628 / NBRC 14792 / USDA 110).